A 192-amino-acid chain; its full sequence is Type-4 uracil-DNA glycosylase (192 aa).

Residues cysteine 18 and cysteine 21 each contribute to the [4Fe-4S] cluster site. Residues 45 to 47, phenylalanine 59, and asparagine 85 each bind uracil; that span reads GEG. Residues cysteine 89 and cysteine 105 each contribute to the [4Fe-4S] cluster site. Position 161 (histidine 161) interacts with uracil.

The protein belongs to the uracil-DNA glycosylase (UDG) superfamily. Type 4 (UDGa) family.

It catalyses the reaction Hydrolyzes single-stranded DNA or mismatched double-stranded DNA and polynucleotides, releasing free uracil.. Its function is as follows. Removes uracil bases that are present in DNA as a result of either deamination of cytosine or misincorporation of dUMP instead of dTMP. Can remove uracil from double-stranded DNA containing either a U/G or U/A base pair as well as from single-stranded DNA. In Thermotoga maritima (strain ATCC 43589 / DSM 3109 / JCM 10099 / NBRC 100826 / MSB8), this protein is Type-4 uracil-DNA glycosylase.